Reading from the N-terminus, the 275-residue chain is Low affinity immunoglobulin gamma Fc region receptor III-A (275 aa).

A signal peptide spans Met-1–Ala-23. Residues Gly-24–Gln-207 are Extracellular-facing. 2 consecutive Ig-like C2-type domains span residues Ala-28 to Gln-92 and Pro-101 to Thr-192. 2 cysteine pairs are disulfide-bonded: Cys-49/Cys-91 and Cys-131/Cys-175. N-linked (GlcNAc...) asparagine glycosylation is found at Asn-65, Asn-168, and Asn-183. Residues Ile-208–Val-228 form a helical membrane-spanning segment. Topologically, residues Gln-229–Arg-275 are cytoplasmic. The segment at Ala-237–Arg-275 is disordered. A Phosphotyrosine modification is found at Tyr-239. Basic and acidic residues predominate over residues Pro-242–Ser-261. Polar residues predominate over residues Phe-262–Arg-275.

As to quaternary structure, forms a heterooligomeric complex with ITAM-containing signaling subunits FCER1G. Interacts (via transmembrane domain) with signaling subunits; this interaction is a prerequisite for receptor complex expression on the cell surface and intracellular signal transduction. Binds the Fc region of antigen-complexed IgG. In terms of processing, N-glycosylated. Phosphorylated following receptor ligation.

Its subcellular location is the cell membrane. Its function is as follows. Receptor for the invariable Fc fragment of immunoglobulin gamma (IgG). Binds with intermediate affinity to both IgG2a and IgG2b. Can bind to IgG2a and IgG2b monomers. Does not display binding to IgG1 or IgG3. Recognizes neutralizing virus-specific IgGs displayed on the cell surface of infected cells and triggers antibody-dependent cellular cytotoxicity (ADCC). Confers protection to lethal influenza virus infection. On splenic dendritic cells, uptakes antigen immune complexes and efficiently divert them into MHC class I and II antigen presentation pathways to provide for superior priming of CD4-positive and CD8-positive T cell immune responses. Mediates neutrophil activation by IgG complexes redundantly with FCGR2A. Plays a role in promoting bone resorption by enhancing osteoclast differentiation following binding to IgG2a. Also acts as a receptor for the Fc region of immunoglobulin epsilon (IgE). Binds with low affinity to both the a and b allotypes of IgE. Has also been shown to bind to IgE allotype a only but not to allotype b. Binds aggregated IgE but not the monomeric form and bound monomeric IgG is readily displaced by IgE complexes. Binding to IgE promotes macrophage-mediated phagocytosis, antigen presentation to T cells, production of pro-inflammatory cytokines and the late phase of cutaneous allergic reactions. Mediates enhanced ADCC in response to afucosylated IgGs. This is Low affinity immunoglobulin gamma Fc region receptor III-A from Cricetulus griseus (Chinese hamster).